A 119-amino-acid chain; its full sequence is MAMTEESMDQVEVNCLCAQHAQTCTRPRCFAKEGLCANWFYNPALAFEGFDIPDSYQEGHGVDIEVKCSHHSSKLCHNGHDMICSYSRLGSHINIRCICNKPRPHMSLIEAACSMYNLN.

This is Early E3 13.3 kDa protein from Canine adenovirus serotype 1 (strain Utrecht) (CAdV-1).